The chain runs to 120 residues: Nascent polypeptide-associated complex protein (120 aa).

An NAC-A/B domain is found at 12–80; the sequence is GMNPAKMKQM…VKEVPKSLEI (69 aa).

The protein belongs to the NAC-alpha family. As to quaternary structure, homodimer. Interacts with the ribosome. Binds ribosomal RNA.

Functionally, contacts the emerging nascent chain on the ribosome. This chain is Nascent polypeptide-associated complex protein, found in Methanosarcina mazei (strain ATCC BAA-159 / DSM 3647 / Goe1 / Go1 / JCM 11833 / OCM 88) (Methanosarcina frisia).